A 263-amino-acid polypeptide reads, in one-letter code: Hydroxyacylglutathione hydrolase (263 aa).

The Zn(2+) site is built by H55, H57, D59, H60, H117, D134, and H172.

Belongs to the metallo-beta-lactamase superfamily. Glyoxalase II family. Monomer. It depends on Zn(2+) as a cofactor.

It carries out the reaction an S-(2-hydroxyacyl)glutathione + H2O = a 2-hydroxy carboxylate + glutathione + H(+). It functions in the pathway secondary metabolite metabolism; methylglyoxal degradation; (R)-lactate from methylglyoxal: step 2/2. Thiolesterase that catalyzes the hydrolysis of S-D-lactoyl-glutathione to form glutathione and D-lactic acid. The protein is Hydroxyacylglutathione hydrolase of Shewanella baltica (strain OS155 / ATCC BAA-1091).